Reading from the N-terminus, the 304-residue chain is Release factor glutamine methyltransferase (304 aa).

2 residues coordinate S-adenosyl-L-methionine: aspartate 144 and asparagine 188. 188 to 191 lines the substrate pocket; it reads NPPY.

The protein belongs to the protein N5-glutamine methyltransferase family. PrmC subfamily.

It carries out the reaction L-glutaminyl-[peptide chain release factor] + S-adenosyl-L-methionine = N(5)-methyl-L-glutaminyl-[peptide chain release factor] + S-adenosyl-L-homocysteine + H(+). Methylates the class 1 translation termination release factors RF1/PrfA and RF2/PrfB on the glutamine residue of the universally conserved GGQ motif. The polypeptide is Release factor glutamine methyltransferase (Mycobacterium tuberculosis (strain CDC 1551 / Oshkosh)).